Reading from the N-terminus, the 360-residue chain is Phenylalanine--tRNA ligase alpha subunit (360 aa).

A Mg(2+)-binding site is contributed by Glu-260.

This sequence belongs to the class-II aminoacyl-tRNA synthetase family. Phe-tRNA synthetase alpha subunit type 1 subfamily. As to quaternary structure, tetramer of two alpha and two beta subunits. Requires Mg(2+) as cofactor.

It localises to the cytoplasm. It catalyses the reaction tRNA(Phe) + L-phenylalanine + ATP = L-phenylalanyl-tRNA(Phe) + AMP + diphosphate + H(+). In Rhizobium etli (strain CIAT 652), this protein is Phenylalanine--tRNA ligase alpha subunit.